The chain runs to 313 residues: Ribosomal RNA small subunit methyltransferase H (313 aa).

S-adenosyl-L-methionine contacts are provided by residues 35-37 (GGY), aspartate 53, phenylalanine 80, aspartate 101, and glutamine 108.

The protein belongs to the methyltransferase superfamily. RsmH family.

The protein localises to the cytoplasm. The enzyme catalyses cytidine(1402) in 16S rRNA + S-adenosyl-L-methionine = N(4)-methylcytidine(1402) in 16S rRNA + S-adenosyl-L-homocysteine + H(+). Functionally, specifically methylates the N4 position of cytidine in position 1402 (C1402) of 16S rRNA. This chain is Ribosomal RNA small subunit methyltransferase H, found in Acidiphilium cryptum (strain JF-5).